A 153-amino-acid chain; its full sequence is SsrA-binding protein (153 aa).

It belongs to the SmpB family.

The protein resides in the cytoplasm. Required for rescue of stalled ribosomes mediated by trans-translation. Binds to transfer-messenger RNA (tmRNA), required for stable association of tmRNA with ribosomes. tmRNA and SmpB together mimic tRNA shape, replacing the anticodon stem-loop with SmpB. tmRNA is encoded by the ssrA gene; the 2 termini fold to resemble tRNA(Ala) and it encodes a 'tag peptide', a short internal open reading frame. During trans-translation Ala-aminoacylated tmRNA acts like a tRNA, entering the A-site of stalled ribosomes, displacing the stalled mRNA. The ribosome then switches to translate the ORF on the tmRNA; the nascent peptide is terminated with the 'tag peptide' encoded by the tmRNA and targeted for degradation. The ribosome is freed to recommence translation, which seems to be the essential function of trans-translation. In Paramagnetospirillum magneticum (strain ATCC 700264 / AMB-1) (Magnetospirillum magneticum), this protein is SsrA-binding protein.